Consider the following 141-residue polypeptide: Large ribosomal subunit protein uL11 (141 aa).

The protein belongs to the universal ribosomal protein uL11 family. As to quaternary structure, part of the ribosomal stalk of the 50S ribosomal subunit. Interacts with L10 and the large rRNA to form the base of the stalk. L10 forms an elongated spine to which L12 dimers bind in a sequential fashion forming a multimeric L10(L12)X complex. Post-translationally, one or more lysine residues are methylated.

Its function is as follows. Forms part of the ribosomal stalk which helps the ribosome interact with GTP-bound translation factors. The protein is Large ribosomal subunit protein uL11 of Streptococcus pyogenes serotype M1.